A 754-amino-acid chain; its full sequence is MLAPSSNCSLASQRLTPEGFAQLQSALQDFVATLPQAFYWDSRSLHTHLRTQTGDCAIAIAAGFQLLLLGRTAAEYCQPHPLSEPHHVSVQFGADSIQRYCQATNLPVEYQPALAQLGDLSLNPDLISQFSNLLIAAIAADRAPLAAQYPAVSVCQPLEQALHWQEEQDRLISQVSAQIRLSLDLSEILTTTIREIRQLLNADRAIIYQFKPQCLDAGLDQRWPLYIPSQSYITYEDRRNEALLSVIDPLVQPGLLITTEEWQRFQQGETLLIDSVGFYKERLPEQYSFYERVQVRSVCKIPILVQGRIWGLLVAHQCQQDHRWQPRERDILQHLAEHLSIAIYQAQLYGQLQDQTQTLENRVLERTQELIDALALAQAANAAKGEFLATMSHELRTPLTCVIGMSSTLLRWAFGPLTERQREYIKAIHDSGEHLLELINDILDLSQIEAGKAALQVRPFSLSRLATQTLNTLQEKARLGEIQLMLDLQLNNRVDVFRADPKRLRQILINLLSNAVKFTEPQGTVFLRVWREGDRAIFQVSDTGIGIPESEQAQLFQKFQQLDTSIRRQYGGTGLGLALTKQLVELHGGHIQIESTVGQGSTFTVWIPEQTLIEPVEPRPSIDNLPAGHILLLEEEDEAATVVCEMLTAAGFKVIWLVDGSTALDQLDLLQPIVILMAWPPPDQSCLLLLQHLREHQADPHPPLVLFLGEPPVDPLLTAQASAILSKPLDPQLLLTTLQGLCPPNLSEGDRPSS.

The interval 1–183 (MLAPSSNCSL…QVSAQIRLSL (183 aa)) is N-terminal domain, not required to complement the deletion strain. Positions 184–338 (DLSEILTTTI…RDILQHLAEH (155 aa)) are GAF domain, required to complement the deletion strain. In terms of domain architecture, Histidine kinase spans 390–611 (TMSHELRTPL…TFTVWIPEQT (222 aa)). The residue at position 393 (H393) is a Phosphohistidine; by autocatalysis. The tract at residues 606-754 (WIPEQTLIEP…NLSEGDRPSS (149 aa)) is psR domain, required to complement the deletion strain and for cell pole localization, attenuates autophosphorylation activity. Binds KaiB(fs). The Response regulatory domain occupies 629-742 (HILLLEEEDE…LLLTTLQGLC (114 aa)).

It in the N-terminal section; belongs to the phytochrome family. As to quaternary structure, homodimer. Part of the circadian clock (KaiA, KaiB, KaiC, CikA, RpaA, SasA), the composition of which varies during the circadian cycle. Interacts with LdpA. KaiA and CikA compete for binding to KaiB(fs).

It localises to the cytoplasm. Its subcellular location is the membrane. The catalysed reaction is ATP + protein L-histidine = ADP + protein N-phospho-L-histidine.. Its function is as follows. Functions in an input pathway to the Kai circadian clock. Senses oxidized quinones via its C-terminal pseudo-receiver domain, providing a link between cell metabolism and the clock. Affects the ratio of phosphorylated to unphosphorylated KaiC, binds quinones via its pseudo-receptor domain. Quinone-binding destabilizes the protein rapidly. Autophosphorylates, does not transfer the phosphate to its pseudo-receiver (PsR) domain. May play a role in cell division, as suggested by its polar location and increased cell length in a deletion strain. Functionally, member of the two-component regulatory system CikA/RpaA output pathway from the circadian clock, negatively regulating kaiBC expression independently of labA and of sasA. One of three clock output pathways. Dephosphorylates phospho-RpaA, enhanced by KaiB and KaiC, has only modest kinase activity on RpaA. A very robust clock is reconstituted with KaiA, KaiB, KaiC, SasA, CikA and RpaA; output is measured by transcription from an appropriate reporter. This is Circadian input-output histidine kinase CikA from Synechococcus elongatus (strain ATCC 33912 / PCC 7942 / FACHB-805) (Anacystis nidulans R2).